The following is a 192-amino-acid chain: Pyridoxal 5'-phosphate synthase subunit PdxT (192 aa).

An L-glutamine-binding site is contributed by 46–48; sequence GES. Residue Cys77 is the Nucleophile of the active site. L-glutamine contacts are provided by residues Arg103 and 131–132; that span reads IR. Residues His167 and Glu169 each act as charge relay system in the active site.

It belongs to the glutaminase PdxT/SNO family. As to quaternary structure, in the presence of PdxS, forms a dodecamer of heterodimers. Only shows activity in the heterodimer.

It carries out the reaction aldehydo-D-ribose 5-phosphate + D-glyceraldehyde 3-phosphate + L-glutamine = pyridoxal 5'-phosphate + L-glutamate + phosphate + 3 H2O + H(+). It catalyses the reaction L-glutamine + H2O = L-glutamate + NH4(+). It functions in the pathway cofactor biosynthesis; pyridoxal 5'-phosphate biosynthesis. In terms of biological role, catalyzes the hydrolysis of glutamine to glutamate and ammonia as part of the biosynthesis of pyridoxal 5'-phosphate. The resulting ammonia molecule is channeled to the active site of PdxS. This is Pyridoxal 5'-phosphate synthase subunit PdxT from Exiguobacterium sibiricum (strain DSM 17290 / CCUG 55495 / CIP 109462 / JCM 13490 / 255-15).